The primary structure comprises 384 residues: 8-amino-7-oxononanoate synthase (384 aa).

Arg21 contributes to the substrate binding site. 108–109 (GF) is a binding site for pyridoxal 5'-phosphate. Substrate is bound at residue His133. Positions 179, 207, and 233 each coordinate pyridoxal 5'-phosphate. Lys236 bears the N6-(pyridoxal phosphate)lysine mark. A substrate-binding site is contributed by Thr352.

This sequence belongs to the class-II pyridoxal-phosphate-dependent aminotransferase family. BioF subfamily. In terms of assembly, homodimer. The cofactor is pyridoxal 5'-phosphate.

It carries out the reaction 6-carboxyhexanoyl-[ACP] + L-alanine + H(+) = (8S)-8-amino-7-oxononanoate + holo-[ACP] + CO2. Its pathway is cofactor biosynthesis; biotin biosynthesis. Catalyzes the decarboxylative condensation of pimeloyl-[acyl-carrier protein] and L-alanine to produce 8-amino-7-oxononanoate (AON), [acyl-carrier protein], and carbon dioxide. The sequence is that of 8-amino-7-oxononanoate synthase from Escherichia coli O7:K1 (strain IAI39 / ExPEC).